The primary structure comprises 837 residues: AdoMet-dependent rRNA methyltransferase SPB1 (837 aa).

Positions 58, 60, 78, 94, and 119 each coordinate S-adenosyl-L-methionine. K159 functions as the Proton acceptor in the catalytic mechanism. Residues 345–390 adopt a coiled-coil conformation; it reads LNEEEQIEKELRDLQEKQKQKQKREKRRKNEEKQKELTRMQMNMLT. Disordered stretches follow at residues 359–381, 483–529, 573–644, and 779–808; these read QEKQ…QKEL, FRAK…DEDD, TDDV…TTKE, and TKKQ…KGIK. Positions 372–381 are enriched in basic and acidic residues; that stretch reads RKNEEKQKEL. The segment covering 518-529 has biased composition (acidic residues); it reads ESDDSELSDEDD. Over residues 593–602 the composition is skewed to basic and acidic residues; it reads SYNEMKKEDL. Acidic residues predominate over residues 603–635; that stretch reads SDSSDEDSSSESDFEIVANDESDGDIDSDYDSD.

The protein belongs to the class I-like SAM-binding methyltransferase superfamily. RNA methyltransferase RlmE family. SPB1 subfamily. In terms of assembly, component of the nucleolar and nucleoplasmic pre-60S ribosomal particle.

Its subcellular location is the nucleus. It is found in the nucleolus. It carries out the reaction a ribonucleotide in rRNA + S-adenosyl-L-methionine = a 2'-O-methylribonucleotide in rRNA + S-adenosyl-L-homocysteine + H(+). In terms of biological role, required for proper assembly of pre-ribosomal particles during the biogenesis of the 60S ribosomal subunit. This chain is AdoMet-dependent rRNA methyltransferase SPB1, found in Candida glabrata (strain ATCC 2001 / BCRC 20586 / JCM 3761 / NBRC 0622 / NRRL Y-65 / CBS 138) (Yeast).